A 708-amino-acid chain; its full sequence is Polyribonucleotide nucleotidyltransferase (708 aa).

Positions 490 and 496 each coordinate Mg(2+). Residues 557–619 (PRIETMTIPK…KSIDDAIRLI (63 aa)) form the KH domain. One can recognise an S1 motif domain in the interval 629-699 (GEVYKGKVRS…KTGKFKLSRK (71 aa)).

The protein belongs to the polyribonucleotide nucleotidyltransferase family. It depends on Mg(2+) as a cofactor.

Its subcellular location is the cytoplasm. The enzyme catalyses RNA(n+1) + phosphate = RNA(n) + a ribonucleoside 5'-diphosphate. Functionally, involved in mRNA degradation. Catalyzes the phosphorolysis of single-stranded polyribonucleotides processively in the 3'- to 5'-direction. This chain is Polyribonucleotide nucleotidyltransferase, found in Bacteroides fragilis (strain ATCC 25285 / DSM 2151 / CCUG 4856 / JCM 11019 / LMG 10263 / NCTC 9343 / Onslow / VPI 2553 / EN-2).